Here is a 180-residue protein sequence, read N- to C-terminus: Segregation and condensation protein B (180 aa).

This sequence belongs to the ScpB family. Homodimer. Homodimerization may be required to stabilize the binding of ScpA to the Smc head domains. Component of a cohesin-like complex composed of ScpA, ScpB and the Smc homodimer, in which ScpA and ScpB bind to the head domain of Smc. The presence of the three proteins is required for the association of the complex with DNA.

The protein resides in the cytoplasm. In terms of biological role, participates in chromosomal partition during cell division. May act via the formation of a condensin-like complex containing Smc and ScpA that pull DNA away from mid-cell into both cell halves. The chain is Segregation and condensation protein B from Staphylococcus aureus (strain USA300).